Consider the following 148-residue polypeptide: uncharacterized protein (148 aa).

The HTH asnC-type domain occupies 4–65 (LDKVDIQLVK…IPDLDKLGYM (62 aa)). The H-T-H motif DNA-binding region spans 23-42 (YRELAELMNTTRQRIARRIT).

This is an uncharacterized protein from Pyrococcus abyssi (strain GE5 / Orsay).